Reading from the N-terminus, the 474-residue chain is Aspartyl protease family protein At5g10770 (474 aa).

Positions 1–25 (MSINRNLLNIIIILCICLNLGCNDG) are cleaved as a signal peptide. Positions 132-469 (YIVTVGLGTP…DGAGGRVGFA (338 aa)) constitute a Peptidase A1 domain. Catalysis depends on residues Asp150 and Asp352. A disulfide bond links Cys391 and Cys432. The GPI-anchor amidated asparagine moiety is linked to residue Asn443. The propeptide at 444-474 (AAIFGNVQQQTLEVVYDGAGGRVGFAPNGCS) is removed in mature form.

Belongs to the peptidase A1 family.

It localises to the cell membrane. Its function is as follows. Probably not redundant with AED1 and not involved in restriction of salicylic acid (SA) or systemic acquired resistance (SAR) signaling. The chain is Aspartyl protease family protein At5g10770 from Arabidopsis thaliana (Mouse-ear cress).